The sequence spans 52 residues: Large ribosomal subunit protein bL33 (52 aa).

It belongs to the bacterial ribosomal protein bL33 family.

This Chlamydia trachomatis serovar A (strain ATCC VR-571B / DSM 19440 / HAR-13) protein is Large ribosomal subunit protein bL33.